The following is a 338-amino-acid chain: LIX1-like protein (338 aa).

The segment at 1-65 (METMRAQRLQ…LLLAGAPGLP (65 aa)) is disordered. A compositionally biased stretch (low complexity) spans 29–38 (TGAPTSAATP). The span at 39–56 (PAGPPPAPPPPAPPPPPL) shows a compositional bias: pro residues.

Belongs to the LIX1 family.

This Rattus norvegicus (Rat) protein is LIX1-like protein (Lix1l).